A 510-amino-acid chain; its full sequence is tRNA(Ile)-lysidine synthase (510 aa).

Residue 32–37 participates in ATP binding; that stretch reads SGGLDS.

It belongs to the tRNA(Ile)-lysidine synthase family.

It is found in the cytoplasm. It catalyses the reaction cytidine(34) in tRNA(Ile2) + L-lysine + ATP = lysidine(34) in tRNA(Ile2) + AMP + diphosphate + H(+). Ligates lysine onto the cytidine present at position 34 of the AUA codon-specific tRNA(Ile) that contains the anticodon CAU, in an ATP-dependent manner. Cytidine is converted to lysidine, thus changing the amino acid specificity of the tRNA from methionine to isoleucine. This chain is tRNA(Ile)-lysidine synthase, found in Blochmanniella pennsylvanica (strain BPEN).